The primary structure comprises 106 residues: MSKLYEWISPDSDVLEQEKTELRPPSMYKVVLNNDDYTPMEFVVEVLDKFFSMDLEKATQLMLTVHYEGKAVCGTFTAEVAETKVAQVNTYSRDNEHPLLCTMEQA.

Belongs to the ClpS family. In terms of assembly, binds to the N-terminal domain of the chaperone ClpA.

Its function is as follows. Involved in the modulation of the specificity of the ClpAP-mediated ATP-dependent protein degradation. This chain is ATP-dependent Clp protease adapter protein ClpS, found in Aliivibrio fischeri (strain ATCC 700601 / ES114) (Vibrio fischeri).